We begin with the raw amino-acid sequence, 434 residues long: Rubisco accumulation factor 1.1, chloroplastic (434 aa).

The transit peptide at Met-1–Lys-51 directs the protein to the chloroplast. The segment at Ile-65–Leu-254 is N-terminal alpha-helix. Positions Val-273 to Pro-419 are C-terminal beta sheet.

The protein belongs to the RAF family. As to quaternary structure, homodimer.

The protein localises to the plastid. The protein resides in the chloroplast. In terms of biological role, required for assembly or stability of RuBisCO. Acts at a postchaperonin step to fold and/or assemble the large subunit (rbcL) into RuBisCO. RAF1 binds first to a rbcL dimer (rbcL(2)), leading to a rbcL(8)-RAF1(4) complex formation. In the next step, RBCS displaces RAF1, thus resulting in holoenzyme formation. This is Rubisco accumulation factor 1.1, chloroplastic from Arabidopsis thaliana (Mouse-ear cress).